Here is a 507-residue protein sequence, read N- to C-terminus: Cyclic GMP-AMP synthase (507 aa).

A DNA-binding region spans residues 1–146 (MEDPRRRTTA…PRAPRGSRKE (146 aa)). The interval 1–151 (MEDPRRRTTA…GSRKEPDKLK (151 aa)) is disordered. Residues 7 to 18 (RTTAPRAKKPSA) show a composition bias toward basic residues. The segment covering 44 to 57 (RRAERDGDTTEKPR) has biased composition (basic and acidic residues). Residues 48–59 (RDGDTTEKPRAP) form a required for association with the cell membrane region. T52 is modified (phosphothreonine). Residues 119 to 132 (RKVVRGPSHRRGAR) are required for activation upon DNA viral infection. Basic residues predominate over residues 121–131 (VVRGPSHRRGA). Positions 154 to 159 (LDKLRL) match the Nuclear export signal motif. Residue K156 is modified to N6-lactoyllysine. A DNA-binding region spans residues 158–201 (RLKRKDISEAAETVNKVVERLLRRMQKRESEFKGVEQLNTGSYY). Position 176 is a polyADP-ribosyl glutamic acid (E176). T197 contacts GTP. Residue S199 participates in ATP binding. Position 199 is a phosphoserine (S199). Y201 bears the Phosphotyrosine mark. E211 and D213 together coordinate Mg(2+). D213 is a 2',3'-cGAMP binding site. K217 is covalently cross-linked (Glycyl lysine isopeptide (Lys-Gly) (interchain with G-Cter in SUMO)). A Glycyl lysine isopeptide (Lys-Gly) (interchain with G-Cter in ubiquitin) cross-link involves residue K271. E272 is modified (5-glutamyl polyglutamate). The short motif at 281-291 (DVSVEKEKPGS) is the Nuclear localization signal element. G290 lines the 2',3'-cGAMP pocket. S291 carries the post-translational modification Phosphoserine; by CDK1 and PKB. A 5-glutamyl glutamate modification is found at E302. GTP is bound at residue D307. Mg(2+) is bound at residue D307. Position 307 (D307) interacts with 2',3'-cGAMP. Positions 329–370 (QGWLGTKVRTNLRREPFYLVPKNAKDGNSFQGETWRLSFSHT) are interaction with collided ribosomes. Residue K335 forms a Glycyl lysine isopeptide (Lys-Gly) (interchain with G-Cter in SUMO); alternate linkage. A Glycyl lysine isopeptide (Lys-Gly) (interchain with G-Cter in ubiquitin); alternate cross-link involves residue K335. Residues K350 and 364–366 (RLS) contribute to the 2',3'-cGAMP site. GTP is bound at residue 364–371 (RLSFSHTE). Residue E371 participates in ATP binding. K372 participates in a covalent cross-link: Glycyl lysine isopeptide (Lys-Gly) (interchain with G-Cter in SUMO); alternate. K372 is covalently cross-linked (Glycyl lysine isopeptide (Lys-Gly) (interchain with G-Cter in ubiquitin); alternate). At K372 the chain carries N6-acetyllysine. The interval 372–395 (KYILNNHGIEKTCCESSGAKCCRK) is DNA-binding. H378 serves as a coordination point for Zn(2+). K382 is covalently cross-linked (Glycyl lysine isopeptide (Lys-Gly) (interchain with G-Cter in SUMO)). K382 carries the post-translational modification N6-acetyllysine. Positions 384, 385, and 392 each coordinate Zn(2+). S-palmitoyl cysteine attachment occurs at residues C392 and C393. Residues K399, K402, K409, and K410 each participate in a glycyl lysine isopeptide (Lys-Gly) (interchain with G-Cter in ubiquitin) cross-link. An ATP-binding site is contributed by K402. At K402 the chain carries N6-acetyllysine. Phosphoserine is present on S420. 420–424 (SYHVK) contributes to the ATP binding site. C459 carries S-palmitoyl cysteine lipidation. K464 participates in a covalent cross-link: Glycyl lysine isopeptide (Lys-Gly) (interchain with G-Cter in SUMO); alternate. A Glycyl lysine isopeptide (Lys-Gly) (interchain with G-Cter in ubiquitin); alternate cross-link involves residue K464. K491 is modified (N6-methyllysine).

The protein belongs to the mab-21 family. In terms of assembly, monomer in the absence of DNA. Homodimer in presence of dsDNA: forms a 2:2 dimer with two enzymes binding to two DNA molecules. Interacts with nucleosomes; interaction is mainly mediated via histones H2A and H2B and inactivates the nucleotidyltransferase activity by blocking DNA-binding and subsequent activation. Interacts with PQBP1 (via WW domain). Interacts with TRIM14; this interaction recruits USP14, leading to deubiquitinate and stabilize CGAS and promote type I interferon production. Interacts with ZCCHC3; promoting sensing of dsDNA by CGAS. Interacts (when not monomethylated) with (poly-ADP-ribosylated) PARP1; interaction takes place in the nucleus and prevents the formation of the PARP1-TIMELESS complex. Interacts (when monomethylated) with SGF29; interaction with SGF29 prevents interaction with PARP1. Interacts with PCBP2; preventing the formation of liquid-like droplets in which CGAS is activated. Interacts with Irgm1; promoting CGAS degradation. Interacts with DDX41. It depends on Mg(2+) as a cofactor. Requires Mn(2+) as cofactor. The cofactor is Zn(2+). The N-terminal disordered part (1-146) is phosphorylated by AURKB during the G2-M transition, blocking CGAS liquid phase separation and preventing activation. Phosphorylation at Tyr-201 by BLK promotes cytosolic retention. Localizes into the nucleus following dephosphorylation at Tyr-201. Phosphorylation at Ser-420 activates the nucleotidyltransferase activity. Dephosphorylation at Ser-420 by PPP6C impairs its ability to bind GTP, thereby inactivating it. Phosphorylation at Thr-52 and Ser-199 by PRKDC inhibits its cyclic GMP-AMP synthase activity by impairing homodimerization and activation. Phosphorylation at Ser-291 by AKT (AKT1, AKT2 or AKT3) suppresses the nucleotidyltransferase activity. Phosphorylation at Ser-291 by CDK1 during mitosis leads to its inhibition, thereby preventing CGAS activation by self-DNA during mitosis. Dephosphorylated at Ser-291 by protein phosphatase PP1 upon mitotic exit. Post-translationally, ubiquitinated at Lys-402 via 'Lys-48'-linked polyubiquitin chains, leading to its SQSTM1-mediated autophagic degradation. Interaction with TRIM14 promotes recruitment of USP14, leading to deubiquitinate Lys-402 and stabilize CGAS. Ubiquitinated at Lys-372 by RNF185 via 'Lys-27'-linked polyubiquitination, promoting CGAS cyclic GMP-AMP synthase activity. Monoubiquitination at Lys-335 by TRIM56 promotes oligomerization and subsequent activation. Monoubiquitination by TRIM41 promotes CGAS activation. Ubiquitination at Lys-271 and Lys-464 via 'Lys-48'-linked polyubiquitination promotes its degradation. Deubiquitination at Lys-271 by USP29 promotes its stabilization. Deubiquitinated by USP27X, promoting its stabilization. Ubiquitinated at Lys-399 via 'Lys-63'-linked polyubiquitin chains by MARCHF8, leading to the inhibition of its DNA binding ability. In cycling cells, nucleosome-bound CGAS is ubiquitinated at Lys-409 and Lys-410 via 'Lys-48'-linked polyubiquitin chains by the ECS(SPSB3) complex, leading to its degradation: ubiquitination and degradation of nuclear CGAS during G1 and G2 phases is required to promote low intranuclear CGAS abundance before the next mitotic cycle. In terms of processing, sumoylated at Lys-217 and Lys-464 by TRIM38 in uninfected cells and during the early phase of viral infection, promoting its stability by preventing ubiquitination at Lys-271 and Lys-464, and subsequent degradation. Desumoylated by SENP2 during the late phase of viral infection. Sumoylation at Lys-335, Lys-372 and Lys-382 prevents DNA-binding, oligomerization and nucleotidyltransferase activity. Desumoylation at Lys-335, Lys-372 and Lys-382 by SENP7 relieves inhibition and activates CGAS. Polyglutamylated by TTLL6 at Glu-272, leading to impair DNA-binding activity. Monoglutamylated at Glu-302 by TTLL4, leading to impair the nucleotidyltransferase activity. Deglutamylated by AGBL5/CCP5 and AGBL6/CCP6. Post-translationally, acetylation at Lys-372, Lys-382 and Lys-402 inhibits the cyclic GMP-AMP synthase activity. Deacetylated upon cytosolic DNA challenge such as viral infections. Acetylation by KAT5 increases the cyclic GMP-AMP synthase activity by promoting DNA-binding and subsequent activation. In terms of processing, proteolytically cleaved by apoptotic caspases during apoptosis, leading to its inactivation. The damage of the nucleus and the mitochondria during apoptosis leads to leakage of nuclear and mitochondrial DNA, which activate CGAS: cleavage and inactivation during apoptosis in required to prevent cytokine overproduction. Cleaved by CASP7 and CASP3 during virus-induced apoptosis, thereby inactivating it and preventing cytokine overproduction. Cleaved by CASP1 upon DNA virus infection; the cleavage impairs cGAMP production. Also cleaved by the pyroptotic CASP4 during non-canonical inflammasome activation; does not cut at the same sites than CASP1. Degraded via selective autophagy following interaction with Irgm1. Irgm1 promotes CGAS recruitment to autophagosome membranes, promoting its SQSTM1/p62-dependent autophagic degradation. Post-translationally, poly-ADP-ribosylation at Glu-176 by PARP1 impairs DNA-binding, thereby preventing the cyclic GMP-AMP synthase activity. In terms of processing, palmitoylation at Cys-459 by ZDHHC18 impairs DNA-binding, thereby preventing the cyclic GMP-AMP synthase activity. Palmitoylation at Cys-392 and Cys-393 by ZDHHC9 promotes homodimerization and cyclic GMP-AMP synthase activity. Depalmitoylation at Cys-392 and Cys-393 by LYPLAL1 impairs homodimerization and cyclic GMP-AMP synthase activity. Monomethylated at Lys-491 by SETD7. Monomethylation promotes interaction with SGF29, preventing interaction between PARP1 nad SGF29. Demethylation by RIOX1 promotes interaction with PARP1, followed by PARP1 inactivation. Post-translationally, lactylation by AARS2 prevents ability to undergo liquid-liquid phase separation (LLPS), thereby inhibiting CGAS activation.

It is found in the nucleus. The protein localises to the chromosome. It localises to the cell membrane. The protein resides in the cytoplasm. Its subcellular location is the cytosol. The catalysed reaction is GTP + ATP = 2',3'-cGAMP + 2 diphosphate. The enzyme catalyses GTP + ATP = pppGp(2'-5')A + diphosphate. It carries out the reaction pppGp(2'-5')A = 2',3'-cGAMP + diphosphate. Its activity is regulated as follows. The enzyme activity is strongly increased by double-stranded DNA (dsDNA), but not by single-stranded DNA or RNA. DNA-binding induces the formation of liquid-like droplets in which CGAS is activated. Liquid-like droplets also create a selective environment that restricts entry of negative regulators, such as TREX1 or BANF1/BAF, allowing sensing of DNA. A number of mechanisms exist to restrict its activity toward self-DNA. The nucleotidyltransferase activity is inhibited in the nucleus via its association with nucleosomes: interacts with the acidic patch of histones H2A and H2B, thereby blocking DNA-binding and subsequent activation. CGAS is also inactive when associated with mitotic chromatin. Chromatin-bound CGAS cannot be activated by exogenous DNA in mitotic cells: phosphorylation of the N-terminal disordered part by AURKB during the G2-M transition blocks CGAS liquid phase separation and activation. Activity toward self-DNA is inhibited by BANF1/BAF upon acute loss of nuclear membrane integrity: BANF1/BAF acts by outcompeting CGAS for DNA-binding, thereby preventing CGAS activation. DNA-induced activation at micronuclei is also limited by TREX1, which degrades micronuclear DNA upon nuclear envelope rupture, thereby preventing CGAS activation. CGAS can be released from nucleosomes and activated by MRE11 component of the MRN complex, which displaces CGAS from acidic-patch-mediated sequestration. Acetylation at Lys-372, Lys-382 and Lys-402 inhibits the cyclic GMP-AMP synthase activity. Acetylation by KAT5 increases the cyclic GMP-AMP synthase activity by promoting DNA-binding and subsequent activation. Phosphorylation at Ser-291 suppresses the nucleotidyltransferase activity. Phosphorylation at Ser-420 promotes the cyclic GMP-AMP synthase activity. Phosphorylation at Thr-52 and Ser-199 inhibits its cyclic GMP-AMP synthase activity. Ubiquitination at Lys-372 via 'Lys-27'-linked polyubiquitination enhances the cyclic GMP-AMP synthase activity. Monoubiquitination at Lys-335 promotes oligomerization and subsequent activation. Sumoylation at Lys-335, Lys-372 and Lys-382 prevents DNA-binding, oligomerization and nucleotidyltransferase activity. The enzyme activity is impaired by the cleavage by CASP1. In addition to DNA, also activated by collided ribosomes upon translation stress: specifically binds collided ribosomes, promoting its activation and triggering type-I interferon production. In hematopoietic stem cells, binding to circular RNA cia-cGAS inhibits the cyclic GMP-AMP synthase activity. Strongly inhibited by compound RU.521, which is specific for mouse protein. In terms of biological role, nucleotidyltransferase that catalyzes the formation of cyclic GMP-AMP (2',3'-cGAMP) from ATP and GTP and plays a key role in innate immunity. Catalysis involves both the formation of a 2',5' phosphodiester linkage at the GpA step and the formation of a 3',5' phosphodiester linkage at the ApG step, producing c[G(2',5')pA(3',5')p]. Acts as a key DNA sensor: directly binds double-stranded DNA (dsDNA), inducing the formation of liquid-like droplets in which CGAS is activated, leading to synthesis of 2',3'-cGAMP, a second messenger that binds to and activates STING1, thereby triggering type-I interferon production. Preferentially binds long dsDNA (around 45 bp) and forms ladder-like networks that function cooperatively to stabilize individual cGAS-dsDNA complexes. Acts as a key foreign DNA sensor, the presence of double-stranded DNA (dsDNA) in the cytoplasm being a danger signal that triggers the immune responses. Has antiviral activity by sensing the presence of dsDNA from DNA viruses in the cytoplasm. Also acts as an innate immune sensor of infection by retroviruses by detecting the presence of reverse-transcribed DNA in the cytosol. Detection of retroviral reverse-transcribed DNA in the cytosol may be indirect and be mediated via interaction with PQBP1, which directly binds reverse-transcribed retroviral DNA. Also detects the presence of DNA from bacteria. 2',3'-cGAMP can be transferred from producing cells to neighboring cells through gap junctions, leading to promote STING1 activation and convey immune response to connecting cells. 2',3'-cGAMP can also be transferred between cells by virtue of packaging within viral particles contributing to IFN-induction in newly infected cells in a cGAS-independent but STING1-dependent manner. Also senses the presence of neutrophil extracellular traps (NETs) that are translocated to the cytosol following phagocytosis, leading to synthesis of 2',3'-cGAMP. In addition to foreign DNA, can also be activated by endogenous nuclear or mitochondrial DNA. When self-DNA leaks into the cytosol during cellular stress (such as mitochondrial stress, DNA damage, mitotic arrest or senescence), or is present in form of cytosolic micronuclei, CGAS is activated leading to a state of sterile inflammation. Acts as a regulator of cellular senescence by binding to cytosolic chromatin fragments that are present in senescent cells, leading to trigger type-I interferon production via STING1 and promote cellular senescence. Also involved in the inflammatory response to genome instability and double-stranded DNA breaks: acts by localizing to micronuclei arising from genome instability. Micronuclei, which as frequently found in cancer cells, consist of chromatin surrounded by its own nuclear membrane: following breakdown of the micronuclear envelope, a process associated with chromothripsis, CGAS binds self-DNA exposed to the cytosol, leading to 2',3'-cGAMP synthesis and subsequent activation of STING1 and type-I interferon production. In a healthy cell, CGAS is however kept inactive even in cellular events that directly expose it to self-DNA, such as mitosis, when cGAS associates with chromatin directly after nuclear envelope breakdown or remains in the form of postmitotic persistent nuclear cGAS pools bound to chromatin. Nuclear CGAS is inactivated by chromatin via direct interaction with nucleosomes, which block CGAS from DNA binding and thus prevent CGAS-induced autoimmunity. Also acts as a suppressor of DNA repair in response to DNA damage: inhibits homologous recombination repair by interacting with PARP1, the CGAS-PARP1 interaction leading to impede the formation of the PARP1-TIMELESS complex. In addition to DNA, also sense translation stress: in response to translation stress, translocates to the cytosol and associates with collided ribosomes, promoting its activation and triggering type-I interferon production. The chain is Cyclic GMP-AMP synthase from Mus musculus (Mouse).